We begin with the raw amino-acid sequence, 410 residues long: Peptidase T (410 aa).

Residue H79 participates in Zn(2+) binding. The active site involves D81. D142 contributes to the Zn(2+) binding site. The active-site Proton acceptor is E176. The Zn(2+) site is built by E177, D199, and H381.

The protein belongs to the peptidase M20B family. Zn(2+) is required as a cofactor.

It is found in the cytoplasm. The catalysed reaction is Release of the N-terminal residue from a tripeptide.. In terms of biological role, cleaves the N-terminal amino acid of tripeptides. In Brevibacillus brevis (strain 47 / JCM 6285 / NBRC 100599), this protein is Peptidase T.